A 127-amino-acid polypeptide reads, in one-letter code: Translation initiation factor 5A (127 aa).

Lys-35 is modified (hypusine).

Belongs to the eIF-5A family.

It is found in the cytoplasm. In terms of biological role, functions by promoting the formation of the first peptide bond. The polypeptide is Translation initiation factor 5A (Methanospirillum hungatei JF-1 (strain ATCC 27890 / DSM 864 / NBRC 100397 / JF-1)).